A 254-amino-acid polypeptide reads, in one-letter code: 5'-nucleotidase SurE (254 aa).

A divalent metal cation is bound by residues aspartate 8, aspartate 9, serine 40, and asparagine 93.

This sequence belongs to the SurE nucleotidase family. It depends on a divalent metal cation as a cofactor.

The protein resides in the cytoplasm. The enzyme catalyses a ribonucleoside 5'-phosphate + H2O = a ribonucleoside + phosphate. Nucleotidase that shows phosphatase activity on nucleoside 5'-monophosphates. The sequence is that of 5'-nucleotidase SurE from Actinobacillus pleuropneumoniae serotype 5b (strain L20).